The primary structure comprises 1082 residues: TNF receptor-associated factor homolog 1b (1082 aa).

The segment at 1 to 54 (MAEAVDEDSGVGRSLEESSNGQHSQAGEALSEWRSSGQVENGTPSTSPSYWDID) is disordered. At alanine 2 the chain carries N-acetylalanine. The segment covering 33–49 (WRSSGQVENGTPSTSPS) has biased composition (polar residues). One can recognise an MATH domain in the interval 67–198 (YGQYTWKIPK…SGCLTIEAKV (132 aa)). Disordered stretches follow at residues 358 to 388 (LPPKDEKGRQNRTKDGNDGEEVNKEADERDE), 440 to 666 (TEQR…SNVG), 697 to 762 (SIVN…QVVL), 780 to 800 (LSAPKQPPATTISRPSSAPII), 812 to 841 (SSVQTTTSLPRSVSSAGRLGPDPSLHNQQT), and 858 to 889 (SSSSSFNHHPSSHGVVPTTLPSSSYSQAPTSS). Composition is skewed to basic and acidic residues over residues 359-388 (PPKDEKGRQNRTKDGNDGEEVNKEADERDE) and 440-453 (TEQRAKRGAAEREK). A coiled-coil region spans residues 446–507 (RGAAEREKKS…EEEKDSVTEK (62 aa)). A compositionally biased stretch (basic residues) spans 454–471 (KSKKKQAKQKRNKNKGKD). Over residues 472 to 488 (KRKEEKVSFATHAKDLE) the composition is skewed to basic and acidic residues. 2 stretches are compositionally biased toward low complexity: residues 519–534 (GDVSDISDSVDGSADI) and 560–573 (SSEGSSRGRGISIS). 2 stretches are compositionally biased toward polar residues: residues 588 to 630 (DDSS…QQVK) and 645 to 666 (QPSTLGTDPKGQNYSSEASNVG). 2 stretches are compositionally biased toward low complexity: residues 858–871 (SSSSSFNHHPSSHG) and 878–889 (PSSSYSQAPTSS).

Forms homooligomers. Interacts with SNC1, RPS2 and CPR1/CPR30. Interacts with ATG6.

Its subcellular location is the cytoplasm. It is found in the cell membrane. Functionally, functions redundantly with TRAF1A in the regulation of plant immune response. Contributes to the turnover of the nucleotide-binding domain and leucine-rich repeat-containing (NB-LRR) immune receptors SNC1 and RPS2. May associate with an E3 ubiquitin-protein ligase complex, which modulates ubiquitination and subsequent degradation of NB-LRR immune sensors to maintain their homeostasis. Functions redundantly with TRAF1A in the regulation of autophagosome formation. Required for SINAT1- and SINAT2-mediated ubiquitination and destabilization of ATG6. Functions as a molecular adapter that helps to regulate autophagy by modulating ATG6 stability. This chain is TNF receptor-associated factor homolog 1b, found in Arabidopsis thaliana (Mouse-ear cress).